Consider the following 430-residue polypeptide: Serine--tRNA ligase (430 aa).

237 to 239 (TAE) is an L-serine binding site. 268-270 (RSE) is an ATP binding site. E291 provides a ligand contact to L-serine. 355–358 (EISS) contacts ATP. Residue S391 participates in L-serine binding.

This sequence belongs to the class-II aminoacyl-tRNA synthetase family. Type-1 seryl-tRNA synthetase subfamily. As to quaternary structure, homodimer. The tRNA molecule binds across the dimer.

The protein localises to the cytoplasm. It carries out the reaction tRNA(Ser) + L-serine + ATP = L-seryl-tRNA(Ser) + AMP + diphosphate + H(+). It catalyses the reaction tRNA(Sec) + L-serine + ATP = L-seryl-tRNA(Sec) + AMP + diphosphate + H(+). It participates in aminoacyl-tRNA biosynthesis; selenocysteinyl-tRNA(Sec) biosynthesis; L-seryl-tRNA(Sec) from L-serine and tRNA(Sec): step 1/1. Catalyzes the attachment of serine to tRNA(Ser). Is also able to aminoacylate tRNA(Sec) with serine, to form the misacylated tRNA L-seryl-tRNA(Sec), which will be further converted into selenocysteinyl-tRNA(Sec). The sequence is that of Serine--tRNA ligase from Citrobacter koseri (strain ATCC BAA-895 / CDC 4225-83 / SGSC4696).